The sequence spans 30 residues: Nattererin-1 (30 aa).

Expressed by the skin glands.

Its subcellular location is the secreted. Functionally, probably has antibacterial activity. The sequence is that of Nattererin-1 from Physalaemus nattereri (Cuyaba dwarf frog).